A 359-amino-acid chain; its full sequence is Gap junction alpha-5 protein (359 aa).

Topologically, residues 1–19 (MGDWSFLGEFLEEVHKHST) are cytoplasmic. The helical transmembrane segment at 20 to 40 (VIGKVWLTVLFIFRMLVLGTA) threads the bilayer. Topologically, residues 41-76 (AESSWGDEQADFLCDTMQPGCENVCYDQAFPISHIR) are extracellular. The chain crosses the membrane as a helical span at residues 77 to 97 (YWVLQVIFVSTPSLVYLGHAV). Residues 98 to 165 (HMVRVQEKRK…CSILIRTTME (68 aa)) are Cytoplasmic-facing. A helical membrane pass occupies residues 166–186 (VAFIVGQYLLYGVFLDTLHVC). The Extracellular portion of the chain corresponds to 187-206 (RRSPCPHPVNCYVSRPTEKN). A helical transmembrane segment spans residues 207 to 227 (VFIVFMLAVAGLSLFLSLAEL). The Cytoplasmic segment spans residues 228–359 (YHLGWKKIRQ…SKARSDDLSV (132 aa)). Disordered stretches follow at residues 285-305 (SNKM…VRSQ) and 317-359 (RYAQ…DLSV). 2 positions are modified to phosphoserine: S354 and S358.

It belongs to the connexin family. Alpha-type (group II) subfamily. A connexon is composed of a hexamer of connexins.

The protein resides in the cell membrane. The protein localises to the cell junction. It is found in the gap junction. Its function is as follows. One gap junction consists of a cluster of closely packed pairs of transmembrane channels, the connexons, through which materials of low MW diffuse from one cell to a neighboring cell. In Bos taurus (Bovine), this protein is Gap junction alpha-5 protein (GJA5).